Here is a 302-residue protein sequence, read N- to C-terminus: Acetylglutamate kinase (302 aa).

Substrate contacts are provided by residues 55 to 56, Arg77, and Asn176; that span reads GG.

It belongs to the acetylglutamate kinase family. ArgB subfamily.

Its subcellular location is the cytoplasm. The catalysed reaction is N-acetyl-L-glutamate + ATP = N-acetyl-L-glutamyl 5-phosphate + ADP. It participates in amino-acid biosynthesis; L-arginine biosynthesis; N(2)-acetyl-L-ornithine from L-glutamate: step 2/4. In terms of biological role, catalyzes the ATP-dependent phosphorylation of N-acetyl-L-glutamate. This is Acetylglutamate kinase from Corynebacterium efficiens (strain DSM 44549 / YS-314 / AJ 12310 / JCM 11189 / NBRC 100395).